The primary structure comprises 906 residues: Ribonucleoside-diphosphate reductase large subunit-like protein (906 aa).

2 disordered regions span residues 1–70 (MNPA…AGNT) and 89–129 (VSWR…LSTF). Residues 98 to 109 (PDGTPSVLSLTR) are compositionally biased toward polar residues.

The protein belongs to the ribonucleoside diphosphate reductase large chain family.

It localises to the virion. The protein localises to the host cytoplasm. Functionally, does not possess a ribonucleotide reductase activity. Betaherpesviruses probably use another strategy to expand the dNTP pool in a quiescent host cell. The sequence is that of Ribonucleoside-diphosphate reductase large subunit-like protein from Homo sapiens (Human).